The primary structure comprises 2641 residues: CCR4-NOT transcription complex subunit let-711 (2641 aa).

An LXXLL motif is present at residues 660-664 (LSELL). Disordered regions lie at residues 771-887 (SGRS…QNAQ), 936-963 (TQRQ…PQQQ), 1197-1221 (EGGR…PAAA), 1518-1565 (QSKI…SQGA), and 2034-2054 (GMNN…AGLQ). Low complexity-rich tracts occupy residues 774-795 (SSSV…QQQQ), 802-839 (LPPS…SQQQ), and 853-877 (PAQF…HMMG). A compositionally biased stretch (pro residues) spans 951 to 960 (PQRPSGPPTP). Low complexity predominate over residues 1205–1221 (GSAQAGSASSTPTPAAA). Residues 2034 to 2046 (GMNNAMNNGAGNA) show a composition bias toward low complexity. Residues 2341–2345 (LRVLL) carry the LXXLL motif. The segment at 2609 to 2641 (AQGSQPQAQPDGAPGPLGNNTGAANQQQNPNTN) is disordered.

Belongs to the CNOT1 family. In terms of assembly, component of the CCR4-NOT complex at least composed of ccf-1, ccr-4 and let-711, which is required for germ cell development in hermaphrodites. Within the complex interacts with ccf-1 and ccr-4; the interactions are direct. Highly expressed in the germline of hermaphrodites.

Its subcellular location is the nucleus. Functionally, scaffolding component of the CCR4-NOT complex which is one of the major cellular mRNA deadenylases and is linked to various cellular processes including bulk mRNA degradation, miRNA-mediated repression, translational repression during translational initiation and general transcription regulation. Positively regulates the accumulation of the CCR4-NOT complex component ccr-1. Within the complex promotes germ cell development and fertility in hermaphrodites. Additional complex functions may be a consequence of its influence on mRNA expression. Its scaffolding function implies its interaction with the catalytic complex module and diverse RNA-binding proteins mediating the complex recruitment to selected mRNA 3'UTRs. Mediates the recruitment of the CCR4-NOT complex to miRNA targets and to the RISC complex. Acts as a transcriptional repressor. Represses the ligand-dependent transcriptional activation by nuclear receptors. In embryos, plays a role in female pronucleus and mitotic spindle positioning during the first cleavage divisions after fertilization. This may partly be through negatively regulating the accumulation of zyg-9 at the centrosome. Negatively regulates the formation of long astral microtubules in developing embryos. Required for the stabilization and degradation of maternal mRNAs such as nos-2 in somatic blastomeres. This Caenorhabditis elegans protein is CCR4-NOT transcription complex subunit let-711.